The chain runs to 291 residues: Potassium-transporting ATPase subunit beta (291 aa).

Topologically, residues 1–36 (MAALQEKKTCGQRMEEFQRYCWNPDTGQMLGRTLSR) are cytoplasmic. A helical; Signal-anchor for type II membrane protein membrane pass occupies residues 37–57 (WVWISLYYVAFYVVMTGLFAL). At 58-291 (CLYVLMQTVD…KVEFKLKIEK (234 aa)) the chain is on the extracellular side. Residues Asn99, Asn103, Asn130, Asn146, and Asn161 are each glycosylated (N-linked (GlcNAc...) asparagine). A disulfide bridge connects residues Cys131 and Cys152. Cysteines 162 and 178 form a disulfide. Asn193 and Asn222 each carry an N-linked (GlcNAc...) asparagine glycan. Positions 194–291 (GSAPRVDCAF…KVEFKLKIEK (98 aa)) are immunoglobulin-like. Cys201 and Cys263 form a disulfide bridge.

This sequence belongs to the X(+)/potassium ATPases subunit beta family. As to quaternary structure, the ATPase pump is composed of two subunits: alpha (catalytic) and beta (regulatory). Interacts with alpha subunit ATP12A; this interaction is required for the formation of a functionally active pump and targeting at the plasma membrane. Interacts (via N-terminus) with alpha subunit ATP4A (via the P-domain). In terms of processing, N-glycosylation is necessary for assembly and functional expression of the pump at the plasma membrane.

Its subcellular location is the apical cell membrane. It is found in the cell membrane. The beta subunit of the gastric H(+)/K(+) ATPase pump which transports H(+) ions in exchange for K(+) ions across the apical membrane of parietal cells. Plays a structural and regulatory role in the assembly and membrane targeting of a functionally active pump. Within a transport cycle, the transfer of a H(+) ion across the membrane is coupled to ATP hydrolysis and is associated with a transient phosphorylation of the alpha subunit that shifts the pump conformation from inward-facing (E1) to outward-facing state (E2). Interacts with the phosphorylation domain of the alpha subunit and functions as a ratchet, stabilizing the lumenal-open E2 conformation and preventing the reverse reaction of the transport cycle. The sequence is that of Potassium-transporting ATPase subunit beta from Homo sapiens (Human).